Consider the following 233-residue polypeptide: Transcriptional regulatory protein WalR (233 aa).

The 114-residue stretch at 4–117 (KVVVVDDEKP…ELIARVKANL (114 aa)) folds into the Response regulatory domain. 4-aspartylphosphate is present on aspartate 53. The ompR/PhoB-type DNA-binding region spans 132 to 231 (TNEITIKDIV…RRGVGYFLQQ (100 aa)).

Post-translationally, phosphorylated by WalK.

The protein resides in the cytoplasm. Member of the two-component regulatory system WalK/WalR. This is Transcriptional regulatory protein WalR (walR) from Staphylococcus epidermidis (strain ATCC 12228 / FDA PCI 1200).